The sequence spans 71 residues: Pro-glucagon (71 aa).

It belongs to the glucagon family.

The protein resides in the secreted. Plays a key role in glucose metabolism and homeostasis. Regulates blood glucose by increasing gluconeogenesis and decreasing glycolysis. This chain is Pro-glucagon (gcg), found in Ictalurus punctatus (Channel catfish).